A 596-amino-acid chain; its full sequence is Chloride intracellular channel protein 6 (596 aa).

The tract at residues 1 to 360 (MAEATEPKEV…ALEEGDPGQE (360 aa)) is disordered. Positions 34–48 (LEGREASEEAAEAPR) are enriched in basic and acidic residues. Position 40 is a phosphoserine (serine 40). A compositionally biased stretch (gly residues) spans 65–74 (GCGQDEGTGG). Positions 83–98 (GPEAETPGASGAPGEA) are enriched in low complexity. Positions 118–130 (SAQQVQGMSSGLD) are enriched in polar residues. Over residues 148-160 (DPTASEAGEEAES) the composition is skewed to acidic residues. Low complexity-rich tracts occupy residues 197-213 (GSESEPQGGGESSPQPQ) and 225-244 (GGNESGELAGASAADAAGEG). Basic and acidic residues predominate over residues 246–290 (TLGKDGSEEAASEDARVDAHENGDQGKLQEETGEEEARPEPELKG). The residue at position 304 (serine 304) is a Phosphoserine. Residues 338-348 (ELGRVNGRREN) are compositionally biased toward basic and acidic residues. The G-site signature appears at 379-382 (CPFS). A helical transmembrane segment spans residues 381–401 (FSQRLFMILWLKGVIFNVTTV). Positions 425 to 596 (DGEVKTDVNK…AYSDAAKRMK (172 aa)) constitute a GST C-terminal domain.

This sequence belongs to the chloride channel CLIC family. In terms of assembly, monomer (soluble state). Interacts with dopamine receptors DRD2, DRD3 and DRD4. In terms of processing, phosphorylated.

Its subcellular location is the cytoplasm. The protein localises to the cell membrane. It carries out the reaction chloride(in) = chloride(out). With respect to regulation, channel activity is redox- and pH-regulated. Inhibited by IAA-94. In terms of biological role, in the soluble state, catalyzes glutaredoxin-like thiol disulfide exchange reactions with reduced glutathione as electron donor. Can insert into membranes and form voltage-dependent chloride-selective channels. The channel opens upon membrane depolarization at positive voltages and closes at negative membrane voltages. May play a critical role in water-secreting cells, possibly through the regulation of chloride ion transport. This Mus musculus (Mouse) protein is Chloride intracellular channel protein 6 (Clic6).